The sequence spans 127 residues: uncharacterized protein (127 aa).

This is an uncharacterized protein from Acanthamoeba polyphaga (Amoeba).